Here is a 2175-residue protein sequence, read N- to C-terminus: Non-reducing polyketide synthase PKS1 (2175 aa).

The interval 5–242 (LLFGDQTAEQ…VSIPIYGPYH (238 aa)) is N-terminal acylcarrier protein transacylase domain (SAT). In terms of domain architecture, Ketosynthase family 3 (KS3) spans 369–801 (TDKIAIVGMA…GGNTALLIED (433 aa)). Residues cysteine 541, histidine 676, and histidine 719 each act as for beta-ketoacyl synthase activity in the active site. The segment at 900-1212 (FCFTGQGSQY…ISTSICHLFT (313 aa)) is malonyl-CoA:ACP transacylase (MAT) domain. The active-site For acyl/malonyl transferase activity is serine 988. The tract at residues 1285-1604 (STSCQNVISE…RKVLNVFLPP (320 aa)) is product template (PT) domain. Residues 1289–1424 (QNVISEEFDG…CTIRYEDKAV (136 aa)) form an N-terminal hotdog fold region. The 311-residue stretch at 1289-1599 (QNVISEEFDG…FQQIPRKVLN (311 aa)) folds into the PKS/mFAS DH domain. The active-site Proton acceptor; for dehydratase activity is the histidine 1321. The interval 1452–1599 (AHKVQRGMAY…FQQIPRKVLN (148 aa)) is C-terminal hotdog fold. Catalysis depends on aspartate 1512, which acts as the Proton donor; for dehydratase activity. Residues 1640 to 1664 (PVRKSAGPAKAAAAPSMPKPSKVAA) are disordered. Low complexity predominate over residues 1643–1664 (KSAGPAKAAAAPSMPKPSKVAA). A Carrier 1 domain is found at 1666–1743 (KPAGSMVDKV…EMKKYFSQFN (78 aa)). Serine 1703 bears the O-(pantetheine 4'-phosphoryl)serine mark. The disordered stretch occupies residues 1766-1804 (ATPFDEMSTPASSAPSVPQSDAGKPSPDSPTGDSLSDDV). Residues 1774–1784 (TPASSAPSVPQ) show a composition bias toward polar residues. Positions 1801–1878 (SDDVGDVSIA…DIENALGMRP (78 aa)) constitute a Carrier 2 domain. Serine 1838 is subject to O-(pantetheine 4'-phosphoryl)serine. A disordered region spans residues 1879-1899 (KPKAVGPKLSKPSTKTDMNEV). Residues 1889 to 1899 (KPSTKTDMNEV) are compositionally biased toward polar residues. The segment at 1932–2158 (KVFFLPDGSG…GHHFSMMKDP (227 aa)) is claisen cyclase domain. Serine 2002 (for Claisen cyclase activity) is an active-site residue.

The cofactor is pantetheine 4'-phosphate.

It catalyses the reaction 6 malonyl-CoA + acetyl-CoA + 6 H(+) = naphtopyrone YWA1 + 6 CO2 + 7 CoA + H2O. It functions in the pathway pigment biosynthesis; melanin biosynthesis. In terms of biological role, non-reducing polyketide synthase; part of the gene cluster 29 that mediates the biosynthesis of mediates the biosynthesis of dihydroxynaphthalene (DHN)-melanin, a bluish-green pigment and a structural component of the conidial wall. The first step of the pathway is the production of the heptaketide naphtopyrone YWA1 by the polyketide synthase PKS1 though condensation of acetyl-CoA with malonyl-CoA. The polypeptide is Non-reducing polyketide synthase PKS1 (Zymoseptoria tritici (strain CBS 115943 / IPO323) (Speckled leaf blotch fungus)).